Reading from the N-terminus, the 429-residue chain is Probable exoglucanase GH6D (429 aa).

The signal sequence occupies residues 1–17; that stretch reads MRAVYAILAGLLATGSA. Substrate is bound by residues Trp75 and Ser77. Active-site proton donor residues include Asp115 and Asp162. Substrate is bound by residues Asn206 and Trp209. Residue Asn237 is glycosylated (N-linked (GlcNAc...) asparagine). Substrate-binding residues include Asn240, Trp300, Lys328, and Glu332. Positions 240 to 261 are disordered; sequence NYNPYSTNNPPPYTAGSPSADE. The disordered stretch occupies residues 362-390; it reads PEIRADGGGGGSPAPGPSSTAVAPSPSAT. Low complexity predominate over residues 378–390; the sequence is PSSTAVAPSPSAT. The CBM1 domain occupies 394–429; sequence NCAARWAQCGGQGWTGPTCCAQGTCQASNQWYSQCL.

This sequence belongs to the glycosyl hydrolase 6 (cellulase B) family.

The protein resides in the secreted. In terms of biological role, probable exoglucanase that may play an important function in biomass degradation by catalyzing the hydrolysis of cellulose. This is Probable exoglucanase GH6D from Podospora anserina (strain S / ATCC MYA-4624 / DSM 980 / FGSC 10383) (Pleurage anserina).